The sequence spans 180 residues: uncharacterized protein (180 aa).

The N-terminal stretch at 1–30 (MRHKIITFILAVVVIIIIGNMIGGGGGSEA) is a signal peptide. The segment at 25 to 46 (GGGSEATSKTSSSSKAETEKTY) is disordered. The segment covering 29-39 (EATSKTSSSSK) has biased composition (low complexity).

It localises to the secreted. This is an uncharacterized protein from Bacillus subtilis (strain 168).